The primary structure comprises 348 residues: Major outer membrane protein P.IB (348 aa).

Positions 1–19 (MKKSLIALTLAALPVAATA) are cleaved as a signal peptide.

This sequence belongs to the Gram-negative porin family. In terms of assembly, homotrimer.

The protein localises to the cell outer membrane. Functionally, serves as a slightly cation selective porin. Major antigen on the gonococcal cell surface and it may have pathogenic properties in addition to its porin activity. This chain is Major outer membrane protein P.IB (porB), found in Neisseria gonorrhoeae.